The chain runs to 32 residues: Cytochrome b6-f complex subunit 7 (32 aa).

Residues 9-27 (AVLSSVLVLVGLAIGFLLL) traverse the membrane as a helical segment.

This sequence belongs to the PetM family. As to quaternary structure, the 4 large subunits of the cytochrome b6-f complex are cytochrome b6, subunit IV (17 kDa polypeptide, PetD), cytochrome f and the Rieske protein, while the 4 small subunits are PetG, PetL, PetM and PetN. The complex functions as a dimer.

It localises to the plastid. The protein localises to the chloroplast thylakoid membrane. In terms of biological role, component of the cytochrome b6-f complex, which mediates electron transfer between photosystem II (PSII) and photosystem I (PSI), cyclic electron flow around PSI, and state transitions. This chain is Cytochrome b6-f complex subunit 7, found in Pyropia yezoensis (Susabi-nori).